The chain runs to 566 residues: MQLKLTKTLPFSENFIMADSEEYKTVIGISFGNQNSSIAFNRDGKTDVLANEEGNRQIPSILSYHGDQEYHGVQARGQLVRNADNSVTNFRDLLGKSHDELTLHHCHYSANPVNVEGQIGFKITVQEDEESDPKEKILTAHEASVRHLRRLTESAEDFLGTKVNGCVMSVPVYFTDAQRKALESAANEAGLPVLQLIHDPAAVILALMYSEEVLIDKTVVVANFGATRSEVSVVSVKGGLMTILASVHDENLGGEQLTDVLVNFFAKEFEKKNGIDPRKNARSLAKLRAQCEITKRVLSNGTTASAAVDSLADGIDFHSSINRLRYDLAASATLNRMADLVTEAVEKANMEPFDISEVILAGGASNTPKLTSLMESIFPEQTIIRSSSSVTPLQLDPSELTAIGSGVQASLIGHFDAADIAASTDAQVVDVPHLTAPIGINEGENFVTIFDIETALPARKTVEVIAPKEGAAFIPIYEAERSVKVTKVEPEPIDEEEAFSDDEEEEPEEIKERIAIPKTLIATITLPDVSPNAKIELVLQIDAEGKLTASARPKDGKGTNVRGSTA.

39 to 46 is a binding site for ATP; it reads AFNRDGKT. Phosphoserine is present on residues Ser-86 and Ser-500.

Belongs to the heat shock protein 70 family.

The polypeptide is Heat shock protein 70 homolog C57A7.12 (Schizosaccharomyces pombe (strain 972 / ATCC 24843) (Fission yeast)).